A 256-amino-acid polypeptide reads, in one-letter code: Small ribosomal subunit protein eS1 (256 aa).

Residues 1-18 (MAVGKNKRLSKGKKGIKK) show a composition bias toward basic residues. The interval 1–20 (MAVGKNKRLSKGKKGIKKRT) is disordered. A2 carries the N-acetylalanine; partial modification.

The protein belongs to the eukaryotic ribosomal protein eS1 family. Component of the small ribosomal subunit. Mature ribosomes consist of a small (40S) and a large (60S) subunit. The 40S subunit contains about 33 different proteins and 1 molecule of RNA (18S). The 60S subunit contains about 49 different proteins and 3 molecules of RNA (25S, 5.8S and 5S).

It is found in the cytoplasm. This is Small ribosomal subunit protein eS1 (rps1) from Aspergillus flavus (strain ATCC 200026 / FGSC A1120 / IAM 13836 / NRRL 3357 / JCM 12722 / SRRC 167).